A 122-amino-acid polypeptide reads, in one-letter code: Small ribosomal subunit protein uS8c (122 aa).

The protein belongs to the universal ribosomal protein uS8 family. Part of the 30S ribosomal subunit.

It localises to the plastid. It is found in the chloroplast. In terms of biological role, one of the primary rRNA binding proteins, it binds directly to 16S rRNA central domain where it helps coordinate assembly of the platform of the 30S subunit. The protein is Small ribosomal subunit protein uS8c (rps8) of Ostreococcus tauri.